The primary structure comprises 108 residues: UPF0235 protein RPB_0109 (108 aa).

Belongs to the UPF0235 family.

This Rhodopseudomonas palustris (strain HaA2) protein is UPF0235 protein RPB_0109.